Reading from the N-terminus, the 692-residue chain is DNA ligase (692 aa).

NAD(+) contacts are provided by residues 35–39, 88–89, and E117; these read DLVYD and SL. Catalysis depends on K119, which acts as the N6-AMP-lysine intermediate. NAD(+) contacts are provided by R140, E176, K301, and K325. 4 residues coordinate Zn(2+): C416, C419, C434, and C439. One can recognise a BRCT domain in the interval 611–692; it reads LTNQSNSWAS…FDLIKNSKKT (82 aa).

The protein belongs to the NAD-dependent DNA ligase family. LigA subfamily. The cofactor is Mg(2+). It depends on Mn(2+) as a cofactor.

The catalysed reaction is NAD(+) + (deoxyribonucleotide)n-3'-hydroxyl + 5'-phospho-(deoxyribonucleotide)m = (deoxyribonucleotide)n+m + AMP + beta-nicotinamide D-nucleotide.. DNA ligase that catalyzes the formation of phosphodiester linkages between 5'-phosphoryl and 3'-hydroxyl groups in double-stranded DNA using NAD as a coenzyme and as the energy source for the reaction. It is essential for DNA replication and repair of damaged DNA. The chain is DNA ligase from Mesomycoplasma hyopneumoniae (strain J / ATCC 25934 / NCTC 10110) (Mycoplasma hyopneumoniae).